The following is a 139-amino-acid chain: MCIFCNIVEGRDHGYIVYSNDRVVAFLDKFPITPGHTLVVPRTHYENFLEISEDVIPYLCTAVRKISIAVKKALKADGIRILTNIGKSAGQVVFHSHFHIVPTWSQDPDIMKDFVPRKEQSREYYEYVQKAIIETLKNI.

The HIT domain maps to 3–110; that stretch reads IFCNIVEGRD…VPTWSQDPDI (108 aa). Residues 95-99 carry the Histidine triad motif motif; sequence HSHFH.

This is an uncharacterized protein from Saccharolobus solfataricus (strain ATCC 35092 / DSM 1617 / JCM 11322 / P2) (Sulfolobus solfataricus).